Reading from the N-terminus, the 439-residue chain is Tol-Pal system protein TolB (439 aa).

A signal peptide spans 1 to 22 (MTKFPRWLAMLVGLLFPLSALT).

Belongs to the TolB family. In terms of assembly, the Tol-Pal system is composed of five core proteins: the inner membrane proteins TolA, TolQ and TolR, the periplasmic protein TolB and the outer membrane protein Pal. They form a network linking the inner and outer membranes and the peptidoglycan layer.

It localises to the periplasm. Functionally, part of the Tol-Pal system, which plays a role in outer membrane invagination during cell division and is important for maintaining outer membrane integrity. In Xylella fastidiosa (strain Temecula1 / ATCC 700964), this protein is Tol-Pal system protein TolB.